The following is a 440-amino-acid chain: Glutamyl-tRNA reductase (440 aa).

Residues 55–58 (TCNR), serine 115, 120–122 (ETQ), and glutamine 126 each bind substrate. Residue cysteine 56 is the Nucleophile of the active site. 199–204 (GSGEMG) lines the NADP(+) pocket.

Belongs to the glutamyl-tRNA reductase family. In terms of assembly, homodimer.

It catalyses the reaction (S)-4-amino-5-oxopentanoate + tRNA(Glu) + NADP(+) = L-glutamyl-tRNA(Glu) + NADPH + H(+). It participates in porphyrin-containing compound metabolism; protoporphyrin-IX biosynthesis; 5-aminolevulinate from L-glutamyl-tRNA(Glu): step 1/2. In terms of biological role, catalyzes the NADPH-dependent reduction of glutamyl-tRNA(Glu) to glutamate 1-semialdehyde (GSA). This Helicobacter hepaticus (strain ATCC 51449 / 3B1) protein is Glutamyl-tRNA reductase.